We begin with the raw amino-acid sequence, 469 residues long: Phosphatidylinositol 4-kinase type 2-beta (469 aa).

The interval M1–E84 is disordered. Residue S37 is modified to Phosphoserine. One can recognise a PI3K/PI4K catalytic domain in the interval G108 to C439. A G-loop region spans residues I114–G120. ATP-binding residues include S121 and K136. The interval E141–Y143 is important for substrate binding. The interval K149 to C162 is important for interaction with membranes. ATP-binding positions include Q245–V248 and R259–R260. The interval K252–R260 is important for interaction with membranes. The catalytic loop stretch occupies residues R289–N297. The activation loop stretch occupies residues A330–F350. Position 332 (D332) interacts with ATP. The interval W345–W354 is important for interaction with membranes.

Belongs to the PI3/PI4-kinase family. Type II PI4K subfamily.

The protein resides in the cytoplasm. Its subcellular location is the cytosol. It localises to the golgi apparatus membrane. It is found in the endoplasmic reticulum membrane. The protein localises to the cell membrane. The protein resides in the early endosome membrane. It carries out the reaction a 1,2-diacyl-sn-glycero-3-phospho-(1D-myo-inositol) + ATP = a 1,2-diacyl-sn-glycero-3-phospho-(1D-myo-inositol 4-phosphate) + ADP + H(+). Together with PI4K2A and the type III PI4Ks (PIK4CA and PIK4CB) it contributes to the overall PI4-kinase activity of the cell. This contribution may be especially significant in plasma membrane, endosomal and Golgi compartments. The phosphorylation of phosphatidylinositol (PI) to PI4P is the first committed step in the generation of phosphatidylinositol 4,5-bisphosphate (PIP2), a precursor of the second messenger inositol 1,4,5-trisphosphate (InsP3). Contributes to the production of InsP3 in stimulated cells and is likely to be involved in the regulation of vesicular trafficking. This Mus musculus (Mouse) protein is Phosphatidylinositol 4-kinase type 2-beta (Pi4k2b).